A 406-amino-acid chain; its full sequence is Lissencephaly-1 homolog (406 aa).

Residues 7-39 (QREELNKAIADYLRSNGYESALEAFQKEAEMPG) enclose the LisH domain. Residues 54 to 81 (TSVIRLQKKVMDLEAKLAEAEKEFQSGG) adopt a coiled-coil conformation. The segment covering 74–89 (EKEFQSGGPNKKERSP) has biased composition (basic and acidic residues). Residues 74 to 99 (EKEFQSGGPNKKERSPSEWIPRPPAR) form a disordered region. WD repeat units follow at residues 104 to 145 (GHRS…RTLK), 146 to 185 (GHTD…NIKT), 188 to 227 (GHDH…CVKT), 230 to 269 (GHRE…CKAE), 272 to 329 (EHEH…CIMT), 332 to 371 (GHDN…CQKT), and 374 to 406 (AHQH…WECR).

This sequence belongs to the WD repeat LIS1/nudF family.

The protein resides in the cytoplasm. The protein localises to the cytoskeleton. It localises to the microtubule organizing center. Its subcellular location is the centrosome. Positively regulates the activity of the minus-end directed microtubule motor protein dynein. May enhance dynein-mediated microtubule sliding by targeting dynein to the microtubule plus end. Required for several dynein- and microtubule-dependent processes. The sequence is that of Lissencephaly-1 homolog from Branchiostoma floridae (Florida lancelet).